Here is a 238-residue protein sequence, read N- to C-terminus: Large ribosomal subunit protein uL2 (238 aa).

A disordered region spans residues proline 199–lysine 238. A compositionally biased stretch (polar residues) spans glutamine 206–arginine 216. Over residues lysine 223–lysine 238 the composition is skewed to basic residues.

Belongs to the universal ribosomal protein uL2 family. As to quaternary structure, part of the 50S ribosomal subunit. Forms a bridge to the 30S subunit in the 70S ribosome.

Its function is as follows. One of the primary rRNA binding proteins. Required for association of the 30S and 50S subunits to form the 70S ribosome, for tRNA binding and peptide bond formation. It has been suggested to have peptidyltransferase activity; this is somewhat controversial. Makes several contacts with the 16S rRNA in the 70S ribosome. This chain is Large ribosomal subunit protein uL2, found in Metallosphaera sedula (strain ATCC 51363 / DSM 5348 / JCM 9185 / NBRC 15509 / TH2).